A 580-amino-acid polypeptide reads, in one-letter code: Cyclin-K (580 aa).

The interval 262–580 (KQQMPHHTPH…GGLGRAAWMR (319 aa)) is disordered. Composition is skewed to low complexity over residues 263-277 (QQMP…QQPP) and 285-321 (VPQV…QQPK). Ser-324, Ser-328, Ser-329, and Ser-340 each carry phosphoserine. The span at 377–386 (PLAAALGEAE) shows a compositional bias: low complexity. Over residues 400 to 426 (QIPPPAHPAPVHQPPPLPHRPPPPPPS) the composition is skewed to pro residues. Low complexity predominate over residues 427–444 (SYMTGMSTTSSYMSGEGY). The span at 477 to 568 (VYPPNPPPPP…PPPIPPPGMP (92 aa)) shows a compositional bias: pro residues.

This sequence belongs to the cyclin family. Cyclin C subfamily. As to quaternary structure, regulatory subunit of cyclin-dependent kinases. Identified in a complex with a kinase and the RNA polymerase II holoenzyme. Interacts with POLR2A. Interacts with CDK12 and CDK13. Interacts with CDK9 according to PubMed:10574912; does not interact with CDK9 according to PubMed:22012619. (Microbial infection) Interacts with human herpes virus 1 (HHV-1) transcriptional regulator ICP22. In terms of tissue distribution, widely expressed. Highest levels in testis.

The protein localises to the nucleus. Its function is as follows. Regulatory subunit of cyclin-dependent kinases that mediates activation of target kinases. Plays a role in transcriptional regulation via its role in regulating the phosphorylation of the C-terminal domain (CTD) of the large subunit of RNA polymerase II (POLR2A). In Homo sapiens (Human), this protein is Cyclin-K (CCNK).